A 260-amino-acid polypeptide reads, in one-letter code: Trans-aconitate 2-methyltransferase (260 aa).

This sequence belongs to the methyltransferase superfamily. Tam family.

The protein localises to the cytoplasm. It carries out the reaction trans-aconitate + S-adenosyl-L-methionine = (E)-3-(methoxycarbonyl)pent-2-enedioate + S-adenosyl-L-homocysteine. Functionally, catalyzes the S-adenosylmethionine monomethyl esterification of trans-aconitate. This is Trans-aconitate 2-methyltransferase from Paracidovorax citrulli (strain AAC00-1) (Acidovorax citrulli).